The sequence spans 162 residues: Balbiani ring protein 2 (162 aa).

The interval 1–31 (CDDAMRKTESDKCTNIGGKFDPSTCKCTPET) is last constant region. The tract at residues 32 to 51 (VTEGPTTCLESSESDEVTTK) is last Cys-1 repeat. The unique region stretch occupies residues 52 to 162 (KPCDCTCAPD…VKGLEDILNS (111 aa)).

Salivary gland.

It is found in the secreted. Used by the larvae to construct a supramolecular structure, the larval tube. The polypeptide is Balbiani ring protein 2 (BR2) (Chironomus pallidivittatus (Midge)).